The following is an 830-amino-acid chain: Vacuolar protein sorting-associated protein 11 homolog (830 aa).

The RING-type; atypical zinc-finger motif lies at 733–775 (CDICREMLSMQSIYFLCQHSFHEECLNYKSTKRQEKFLCIICK).

It belongs to the VPS11 family. Part of the homotypic fusion and vacuole protein sorting (HOPS) complex, composed of Vps16A, car/Vps33A, dor/Vps18, Vps39, Vps11 and lt/Vps41. Unlike in other species, not part of the class C core vacuole/endosome tethering (CORVET) complex.

The protein localises to the late endosome membrane. It is found in the lysosome membrane. In terms of biological role, part of the homotypic fusion and vacuole protein sorting (HOPS) tethering complex involved in endo-lysosomal vesicle trafficking and lysosome biogenesis, but unlike in many other species does not form part of the class C core vacuole/endosome tethering (CORVET) complex. The HOPS complex facilitates docking and fusion of lysosomes with late endosomes and several other types of vesicles. The HOPS complex is also involved in autophagy, pigment granule biogenesis and crinophagy (the elimination of unused secretory granules through fusion with lysosomes). The HOPS complex probably instigates autophagosome-lysosome fusion by binding autophagosome-associated Syx17/syntaxin 17 and promoting assembly of the trans-SNARE complex. Independent of Syx17/syntaxin 17, HOPS is involved in biosynthetic transport to lysosomes and lysosome-related organelles such as eye-pigment granules. Required for autophagocytosis-dependent remodeling of myofibrils and transverse-tubules (T-tubules) during metamorphosis. In Drosophila melanogaster (Fruit fly), this protein is Vacuolar protein sorting-associated protein 11 homolog.